The primary structure comprises 190 residues: MAGERERGGRDRGPREERDSEFVDKLVHINRVAKVVKGGKRFGFAALVVIGDQKGRVGFGHGKAREVPEAIRKATESAKRNLTRVPLREGRTLHHDIAGRHGAGRVYLRAAPAGTGIIAGGPMRAVFETLGIQDVVAKSIGSSNPYNMVRATFDALKHQDSPRSVAARRNIKVSTLQSRRVGGDAEVVAE.

The region spanning 22-85 (FVDKLVHINR…ESAKRNLTRV (64 aa)) is the S5 DRBM domain.

Belongs to the universal ribosomal protein uS5 family. Part of the 30S ribosomal subunit. Contacts proteins S4 and S8.

Its function is as follows. With S4 and S12 plays an important role in translational accuracy. Functionally, located at the back of the 30S subunit body where it stabilizes the conformation of the head with respect to the body. In Rhodopseudomonas palustris (strain BisA53), this protein is Small ribosomal subunit protein uS5.